The primary structure comprises 556 residues: 2-succinyl-5-enolpyruvyl-6-hydroxy-3-cyclohexene-1-carboxylate synthase (556 aa).

It belongs to the TPP enzyme family. MenD subfamily. In terms of assembly, homodimer. Mg(2+) serves as cofactor. It depends on Mn(2+) as a cofactor. Thiamine diphosphate is required as a cofactor.

The enzyme catalyses isochorismate + 2-oxoglutarate + H(+) = 5-enolpyruvoyl-6-hydroxy-2-succinyl-cyclohex-3-ene-1-carboxylate + CO2. It participates in quinol/quinone metabolism; 1,4-dihydroxy-2-naphthoate biosynthesis; 1,4-dihydroxy-2-naphthoate from chorismate: step 2/7. Its pathway is quinol/quinone metabolism; menaquinone biosynthesis. In terms of biological role, catalyzes the thiamine diphosphate-dependent decarboxylation of 2-oxoglutarate and the subsequent addition of the resulting succinic semialdehyde-thiamine pyrophosphate anion to isochorismate to yield 2-succinyl-5-enolpyruvyl-6-hydroxy-3-cyclohexene-1-carboxylate (SEPHCHC). The protein is 2-succinyl-5-enolpyruvyl-6-hydroxy-3-cyclohexene-1-carboxylate synthase of Salmonella gallinarum (strain 287/91 / NCTC 13346).